Consider the following 263-residue polypeptide: Lens fiber major intrinsic protein (263 aa).

Residues 1–9 lie on the Cytoplasmic side of the membrane; it reads MWELRSASF. The helical transmembrane segment at 10 to 29 threads the bilayer; sequence WRAIFAEFFATLFYVFFGLG. At 30-41 the chain is on the extracellular side; sequence SSLRWAPGPLHV. Residues 42 to 59 form a helical membrane-spanning segment; the sequence is LQVAMAFGLALATLVQSV. Topologically, residues 60–61 are cytoplasmic; the sequence is GH. The segment at residues 62 to 77 is an intramembrane region (discontinuously helical); sequence ISGAHVNPAVTFAFLV. The NPA 1 motif lies at 68 to 70; it reads NPA. At 78–82 the chain is on the cytoplasmic side; that stretch reads GSQMS. Residues 83–106 form a helical membrane-spanning segment; that stretch reads LLRAFCYMAAQLLGAVAGAAVLYS. The Extracellular portion of the chain corresponds to 107 to 127; sequence VTPPAVRGNLALNTLHPAVSV. The chain crosses the membrane as a helical span at residues 128-148; that stretch reads GQATTVEIFLTLQFVLCIFAT. Residues 149 to 156 lie on the Cytoplasmic side of the membrane; that stretch reads YDERRNGQ. Residues 157 to 175 traverse the membrane as a helical segment; that stretch reads LGSVALAVGFSLALGHLFG. The Extracellular portion of the chain corresponds to 176–178; it reads MYY. Residues 179–193 constitute an intramembrane region (discontinuously helical); it reads TGAGMNPARSFAPAI. An NPA 2 motif is present at residues 184–186; the sequence is NPA. The Extracellular portion of the chain corresponds to 194–200; that stretch reads LTGNFTN. A helical membrane pass occupies residues 201 to 222; the sequence is HWVYWVGPIIGGGLGSLLYDFL. Residues 223–263 lie on the Cytoplasmic side of the membrane; sequence LFPRLKSISERLSVLKGAKPDVSNGQPEVTGEPVELNTQAL. Residues 227 to 237 form an interaction with CALM region; that stretch reads LKSISERLSVL. Phosphoserine occurs at positions 235 and 245. A deamidated asparagine; by deterioration mark is found at Asn-246 and Asn-259.

The protein belongs to the MIP/aquaporin (TC 1.A.8) family. Homotetramer; each monomer provides an independent water pore. Two homotetramers on opposing membranes can dimerize, forming a cell-cell junction. Interacts with CALM; the calcium-calmodulin/CALM complex interacts with the cytoplasmic domains of two aquaporins, leading to channel closure. Interacts with BFSP1 (via C-terminus); prevents calcium-dependent inhibition of the water channel activity. Subject to partial proteolytic cleavage in the eye lens core. Partial proteolysis promotes interactions between tetramers from adjoining membranes. In terms of processing, fatty acylated at Met-1 and Lys-238. The acyl modifications, in decreasing order of ion abundance, are: oleoyl (C18:1) &gt; palmitoyl (C16:0) &gt; stearoyl (C18:0) &gt; eicosenoyl (C20:1) &gt; dihomo-gamma-linolenoyl (C20:3) &gt; palmitoleoyl (C16:1) &gt; eicosadienoyl (C20:2). As to expression, expressed in the cortex and nucleus of the retina lens (at protein level). Major component of lens fiber gap junctions.

It is found in the cell membrane. Its subcellular location is the cell junction. The enzyme catalyses H2O(in) = H2O(out). With respect to regulation, the water channel activity is inhibited by calcium through calmodulin/CALM. In terms of biological role, aquaporins form homotetrameric transmembrane channels, with each monomer independently mediating water transport across the plasma membrane along its osmotic gradient. Specifically expressed in lens fiber cells, this aquaporin is crucial for maintaining lens water homeostasis and transparency. Beyond water permeability, it also acts as a cell-to-cell adhesion molecule, forming thin junctions between lens fiber cells that are essential for maintaining the ordered structure and transparency of the lens. In Homo sapiens (Human), this protein is Lens fiber major intrinsic protein.